The sequence spans 224 residues: UPF0173 metal-dependent hydrolase TK0141 (224 aa).

The protein belongs to the UPF0173 family.

This is UPF0173 metal-dependent hydrolase TK0141 from Thermococcus kodakarensis (strain ATCC BAA-918 / JCM 12380 / KOD1) (Pyrococcus kodakaraensis (strain KOD1)).